We begin with the raw amino-acid sequence, 388 residues long: 3-oxo-Delta(4,5)-steroid 5-beta-reductase (388 aa).

Ser-2 carries the N-acetylserine modification. NADP(+) contacts are provided by residues 35-37 (TGI), 63-64 (RR), 81-82 (DV), Thr-105, and Gln-143. Residues Lys-147 and Tyr-178 contribute to the active site. Residues Tyr-178, Ile-205, and 212-214 (SLM) each bind NADP(+).

It belongs to the short-chain dehydrogenases/reductases (SDR) family. Highly divergent. As to quaternary structure, homodimer. Expressed in roots, stems, leaves, flowers, seeds and siliques. Expressed in the vascular bundles.

It catalyses the reaction 5beta-cholestan-3-one + NADP(+) = cholest-4-en-3-one + NADPH + H(+). The enzyme catalyses 4,5beta-dihydrocortisone + NADP(+) = cortisone + NADPH + H(+). In terms of biological role, involved in vascular strand development. Catalyzes the stereospecific conversion of progesterone to 5-beta-pregnane-3,20-dione. Can use progesterone, testosterone, 21-acetyl cortexone, 2-cyclohexenone, but-1-en-3-one, ethyl acrylate, ethylmethacrylate, cortisone and canarigenone as substrates, lower activity with 3-methyl-2-cyclohexenone and 3,5,5-trimethyl-2-cyclohexenone as substrate, and no activity with canarigenin, canarigenin digitoxoside and pregnenolone. May be involved in the formation of 5-beta phytoecdysteroids. The protein is 3-oxo-Delta(4,5)-steroid 5-beta-reductase (VEP1) of Arabidopsis thaliana (Mouse-ear cress).